Here is a 769-residue protein sequence, read N- to C-terminus: Phenylalanine--tRNA ligase beta subunit (769 aa).

The 102-residue stretch at 40–141 folds into the tRNA-binding domain; the sequence is GKLLTIARVA…GEPIPGCEPD (102 aa). Positions 389-467 constitute a B5 domain; the sequence is PAPPPIELPL…RMIGYDSIAP (79 aa). Aspartate 445, aspartate 451, glutamate 454, and glutamate 455 together coordinate Mg(2+). Positions 676–768 constitute an FDX-ACB domain; sequence RRYPSSAFDL…GMRAKGYELR (93 aa).

The protein belongs to the phenylalanyl-tRNA synthetase beta subunit family. Type 1 subfamily. As to quaternary structure, tetramer of two alpha and two beta subunits. Mg(2+) is required as a cofactor.

It is found in the cytoplasm. It carries out the reaction tRNA(Phe) + L-phenylalanine + ATP = L-phenylalanyl-tRNA(Phe) + AMP + diphosphate + H(+). This is Phenylalanine--tRNA ligase beta subunit from Solibacter usitatus (strain Ellin6076).